A 152-amino-acid chain; its full sequence is Complexin (152 aa).

The segment at 1–119 (MAAFIAKQMV…EEEDDDEFAK (119 aa)) is disordered. A compositionally biased stretch (acidic residues) spans 23 to 39 (DEGEKEGNENAEEEAAA). Basic and acidic residues-rich tracts occupy residues 41–82 (EEAR…VKEE) and 90–104 (DEGRVGRKKKTKEEL). The tract at residues 59–75 (EEEREEMRQTIRDKYGL) is interaction with the SNARE complex. C149 carries the cysteine methyl ester modification. A lipid anchor (S-farnesyl cysteine) is attached at C149. The propeptide at 150 to 152 (SLQ) is removed in mature form.

This sequence belongs to the complexin/synaphin family. As to quaternary structure, binds to the SNARE core complex containing SNAP25, synaptobrevin and syntaxin-1.

It is found in the membrane. The protein localises to the cytoplasm. The protein resides in the cytosol. Positively regulates a late step in synaptic vesicle exocytosis. The protein is Complexin (cpx) of Doryteuthis pealeii (Longfin inshore squid).